Reading from the N-terminus, the 33-residue chain is Zinc metalloproteinase-disintegrin-like moojenin (33 aa).

In terms of domain architecture, Disintegrin spans 8 to 33 (PPVCGNELLEVGEECDCGTPENCQNE). Ca(2+)-binding residues include V10, N13, L15, E17, E20, and D23. 2 cysteine pairs are disulfide-bonded: C11-C30 and C24-C30.

It belongs to the venom metalloproteinase (M12B) family. P-III subfamily. P-IIIb sub-subfamily. Monomer. Zn(2+) is required as a cofactor. In terms of processing, the N-terminus (from the N-terminal region of the metalloproteinase domain) is blocked. Expressed by the venom gland.

Its subcellular location is the secreted. With respect to regulation, the fibrinogenolytic and coagulant activities of the moojenin were abolished by preincubation with EDTA, 1,10-phenanthroline and beta-mercaptoethanol. Functionally, metalloproteinase moojenin: snake venom metalloproteinase that cleaves both alpha- and beta-chains of fibrinogen, but not the gamma-chain. Shows a coagulant activity on bovine plasma about 3.1 fold lower than crude venom. Renders the blood incoagulable when intraperitoneally administered into mice. Induces necrosis in liver and muscle, but does not cause histological alterations in mouse lungs, kidney or heart. In Bothrops moojeni (Lance-headed viper), this protein is Zinc metalloproteinase-disintegrin-like moojenin.